The chain runs to 400 residues: MSSKLVLVLNCGSSSLKFAIIDAINGEEYLSGLAECFNLPEARIKWKMDGGKQDAELGAGAAHSEALNFIVNTILSQKPELSAQLVAIGHRIVHGGEKFTKSAIITDDVLQGIKDSVPFAPLHNPAHLIGIDEALKSFPHLTDKNVAVFDTAFHQTMPEESYLYALPYKLYKENHIRRYGAHGTSHYFVSREAAKVLNKPVEELNVITCHLGNGGSVTAIRNGECVDTSMGLTPLEGLVMGTRSGDIDPAIIFHLHDALGMDVASINTLLTKESGLLGLTEVTSDCRYVEDNYETKADAKRAMDVYCHRLAKYIGSYAALMEGRLDAVIFTGGIGENAAMVRELSLKKLGLLGFDVDHERNLAARFGKGGNIAKDGTRPALVIPTNEELVIAEDAYRLTA.

Asn10 provides a ligand contact to Mg(2+). Lys17 contacts ATP. Substrate is bound at residue Arg91. Asp150 acts as the Proton donor/acceptor in catalysis. Residues 210–214 (HLGNG), 285–287 (DCR), and 333–337 (GIGEN) contribute to the ATP site. Position 387 (Glu387) interacts with Mg(2+).

This sequence belongs to the acetokinase family. Homodimer. Mg(2+) is required as a cofactor. Mn(2+) serves as cofactor.

It localises to the cytoplasm. It catalyses the reaction acetate + ATP = acetyl phosphate + ADP. The protein operates within metabolic intermediate biosynthesis; acetyl-CoA biosynthesis; acetyl-CoA from acetate: step 1/2. In terms of biological role, catalyzes the formation of acetyl phosphate from acetate and ATP. Can also catalyze the reverse reaction. This chain is Acetate kinase, found in Pectobacterium atrosepticum (strain SCRI 1043 / ATCC BAA-672) (Erwinia carotovora subsp. atroseptica).